Reading from the N-terminus, the 255-residue chain is Ribonuclease HII (255 aa).

The RNase H type-2 domain maps to 72–255 (RLIAGIDEVG…RTFAPIKDMI (184 aa)). Residues aspartate 78, glutamate 79, and aspartate 170 each coordinate a divalent metal cation.

The protein belongs to the RNase HII family. Requires Mn(2+) as cofactor. The cofactor is Mg(2+).

The protein resides in the cytoplasm. It carries out the reaction Endonucleolytic cleavage to 5'-phosphomonoester.. Its function is as follows. Endonuclease that specifically degrades the RNA of RNA-DNA hybrids. This is Ribonuclease HII from Enterococcus faecalis (strain ATCC 700802 / V583).